Here is a 167-residue protein sequence, read N- to C-terminus: Ribosome rescue factor SmrB (167 aa).

The Smr domain occupies 91-166 (LDLHGLTREQ…GEAAILILVD (76 aa)).

Belongs to the SmrB family. Associates with collided ribosomes, but not with correctly translating polysomes.

Its function is as follows. Acts as a ribosome collision sensor. Detects stalled/collided disomes (pairs of ribosomes where the leading ribosome is stalled and a second ribosome has collided with it) and endonucleolytically cleaves mRNA at the 5' boundary of the stalled ribosome. Stalled/collided disomes form a new interface (primarily via the 30S subunits) that binds SmrB. Cleaved mRNA becomes available for tmRNA ligation, leading to ribosomal subunit dissociation and rescue of stalled ribosomes. In Haemophilus influenzae (strain ATCC 51907 / DSM 11121 / KW20 / Rd), this protein is Ribosome rescue factor SmrB.